Consider the following 672-residue polypeptide: uncharacterized protein (672 aa).

Over residues 1 to 10 (MAKSDGDDPL) the composition is skewed to basic and acidic residues. The interval 1-41 (MAKSDGDDPLRPASPRLRSSRRHSLRYSAYTGGPDPLAPPV) is disordered.

This is an uncharacterized protein from Mycobacterium bovis (strain ATCC BAA-935 / AF2122/97).